Here is a 220-residue protein sequence, read N- to C-terminus: Ribosome biogenesis protein 15 (220 aa).

Residues 1–82 are disordered; it reads MVKSTSKTST…KQANEKKSKD (82 aa). A compositionally biased stretch (basic and acidic residues) spans 9-30; sequence STKETVTKQPTEEKPIQEKEEL. A compositionally biased stretch (acidic residues) spans 39–60; the sequence is SDEEDEKDEDEIEGLAASDDEQ. Residues 91-169 enclose the RRM domain; sequence GIIYVSRLPH…HLLQVRVLPK (79 aa).

In terms of assembly, component of the pre-66S ribosomal particle. Interacts with NOP7 and RRP1.

Its subcellular location is the cytoplasm. The protein localises to the nucleus. It localises to the nucleolus. In terms of biological role, involved in the biogenesis of the 60S ribosomal subunit. Required for pre-rRNA processing and cytokinesis. Associates with the precursors of the 25S and 5.8S rRNAs. This is Ribosome biogenesis protein 15 from Saccharomyces cerevisiae (strain ATCC 204508 / S288c) (Baker's yeast).